The following is a 553-amino-acid chain: Solute carrier family 22 member 12 (553 aa).

The chain crosses the membrane as a helical span at residues 16 to 36 (FQLLQAVALVTPILWVTTQNM). Asparagine 56, asparagine 102, and asparagine 107 each carry an N-linked (GlcNAc...) asparagine glycan. 11 helical membrane-spanning segments follow: residues 146 to 166 (PMAQ…CGHA), 182 to 202 (LVSV…YCLF), 204 to 224 (FLVA…LMEW), 232 to 252 (LMMT…GSVA), 260 to 280 (MLQL…WWLP), 351 to 371 (FISM…ALDL), 378 to 398 (IFLL…GSLL), 407 to 427 (LCQA…ILVP), 435 to 455 (SSLA…VTIF), 466 to 486 (MTAV…GPLV), and 495 to 515 (WLPL…ALLL). Serine 534 is subject to Phosphoserine.

Belongs to the major facilitator (TC 2.A.1) superfamily. Organic cation transporter (TC 2.A.1.19) family. As to quaternary structure, interacts with PDZK1. In terms of processing, N-glycosylated. As to expression, expressed in the proximal tubular epithelial cells in kidney.

It is found in the apical cell membrane. It carries out the reaction urate(out) + (S)-lactate(in) = urate(in) + (S)-lactate(out). The catalysed reaction is nicotinate(in) + urate(out) = nicotinate(out) + urate(in). It catalyses the reaction urate(out) + n chloride(in) = urate(in) + n chloride(out). The enzyme catalyses orotate(out) + nicotinate(in) = orotate(in) + nicotinate(out). Its function is as follows. Electroneutral antiporter that translocates urate across the apical membrane of proximal tubular cells in exchange for monovalent organic or inorganic anions. Involved in renal reabsorption of urate and helps maintaining blood levels of uric acid. Mediates urate uptake by an exchange with organic anions such as (S)-lactate and nicotinate, and inorganic anion Cl(-). Other inorganic anions such as Br(-), I(-) and NO3(-) may also act as counteranions that exchange for urate. Also mediates orotate tubular uptake coupled with nicotinate efflux and to a lesser extent with lactate efflux, therefore displaying a potential role in orotate renal reabsorption. Orotate transport is Cl(-)-dependent. The protein is Solute carrier family 22 member 12 (Slc22a12) of Rattus norvegicus (Rat).